The following is a 299-amino-acid chain: UDP-N-acetylenolpyruvoylglucosamine reductase (299 aa).

An FAD-binding PCMH-type domain is found at 19 to 192 (LGGQALAEVR…AAVTLQLRRS (174 aa)). Residue arginine 169 is part of the active site. Catalysis depends on cysteine 221, which acts as the Proton donor. Glutamate 292 is a catalytic residue.

It belongs to the MurB family. FAD serves as cofactor.

It is found in the cytoplasm. It catalyses the reaction UDP-N-acetyl-alpha-D-muramate + NADP(+) = UDP-N-acetyl-3-O-(1-carboxyvinyl)-alpha-D-glucosamine + NADPH + H(+). It participates in cell wall biogenesis; peptidoglycan biosynthesis. In terms of biological role, cell wall formation. This is UDP-N-acetylenolpyruvoylglucosamine reductase from Oleidesulfovibrio alaskensis (strain ATCC BAA-1058 / DSM 17464 / G20) (Desulfovibrio alaskensis).